The primary structure comprises 219 residues: Phosphatidylserine decarboxylase proenzyme (219 aa).

Ser-188 serves as the catalytic Schiff-base intermediate with substrate; via pyruvic acid. At Ser-188 the chain carries Pyruvic acid (Ser); by autocatalysis.

The protein belongs to the phosphatidylserine decarboxylase family. PSD-A subfamily. As to quaternary structure, heterodimer of a large membrane-associated beta subunit and a small pyruvoyl-containing alpha subunit. Pyruvate serves as cofactor. Is synthesized initially as an inactive proenzyme. Formation of the active enzyme involves a self-maturation process in which the active site pyruvoyl group is generated from an internal serine residue via an autocatalytic post-translational modification. Two non-identical subunits are generated from the proenzyme in this reaction, and the pyruvate is formed at the N-terminus of the alpha chain, which is derived from the carboxyl end of the proenzyme. The post-translation cleavage follows an unusual pathway, termed non-hydrolytic serinolysis, in which the side chain hydroxyl group of the serine supplies its oxygen atom to form the C-terminus of the beta chain, while the remainder of the serine residue undergoes an oxidative deamination to produce ammonia and the pyruvoyl prosthetic group on the alpha chain.

Its subcellular location is the cell membrane. It carries out the reaction a 1,2-diacyl-sn-glycero-3-phospho-L-serine + H(+) = a 1,2-diacyl-sn-glycero-3-phosphoethanolamine + CO2. It participates in phospholipid metabolism; phosphatidylethanolamine biosynthesis; phosphatidylethanolamine from CDP-diacylglycerol: step 2/2. Functionally, catalyzes the formation of phosphatidylethanolamine (PtdEtn) from phosphatidylserine (PtdSer). In Ruegeria pomeroyi (strain ATCC 700808 / DSM 15171 / DSS-3) (Silicibacter pomeroyi), this protein is Phosphatidylserine decarboxylase proenzyme.